The following is a 105-amino-acid chain: Integration host factor subunit beta (105 aa).

The protein belongs to the bacterial histone-like protein family. As to quaternary structure, heterodimer of an alpha and a beta chain.

This protein is one of the two subunits of integration host factor, a specific DNA-binding protein that functions in genetic recombination as well as in transcriptional and translational control. In Nitrosomonas eutropha (strain DSM 101675 / C91 / Nm57), this protein is Integration host factor subunit beta.